Reading from the N-terminus, the 352-residue chain is MKEKNKHILVAMSGGVDSTVAAALLLAQGHQVSGVTMRVWDTEPLGDGREPAHIRDARKVAFDLGIPLHVVDLREEFLQQVVTPFCEEYLSGRTPNPCVLCNRVFKFSRLLREADRLGADALATGHYARIVEHDGLKVLAKGSNRQKDQSYFLFTLTQQQLQRVVFPLGEMSKEEVRTHAERLGLHVAQKGDSQDICFIPDGDYIGFLERQSHATDTEGSIVHVSGKRLGKHRGAYRFTVGQRRGLGIAWPEPLYVVAIDAAKKQVIVGEKEHLHVDRLVTTGTNWIVAQPQQPLQARCRIRYRHQEAPCTLVVLGNDRVEVRFDEPQSGVSPGQAAVFYDEDRVLGGGWIA.

ATP is bound by residues 11-18 (AMSGGVDS) and Met-37. Cys-101 (nucleophile) is an active-site residue. Cysteines 101 and 197 form a disulfide. Gly-125 lines the ATP pocket. Residues 147–149 (KDQ) are interaction with tRNA. Cys-197 serves as the catalytic Cysteine persulfide intermediate. Residues 302–303 (RY) are interaction with tRNA.

The protein belongs to the MnmA/TRMU family.

The protein resides in the cytoplasm. The enzyme catalyses S-sulfanyl-L-cysteinyl-[protein] + uridine(34) in tRNA + AH2 + ATP = 2-thiouridine(34) in tRNA + L-cysteinyl-[protein] + A + AMP + diphosphate + H(+). Its function is as follows. Catalyzes the 2-thiolation of uridine at the wobble position (U34) of tRNA, leading to the formation of s(2)U34. The protein is tRNA-specific 2-thiouridylase MnmA of Syntrophotalea carbinolica (strain DSM 2380 / NBRC 103641 / GraBd1) (Pelobacter carbinolicus).